The sequence spans 315 residues: Malate dehydrogenase (315 aa).

NAD(+) contacts are provided by residues 11–16 (GAGHVG) and Asp-35. Arg-84 and Arg-90 together coordinate substrate. NAD(+) contacts are provided by residues Asn-97 and 120 to 122 (VTN). Residues Asn-122 and Arg-153 each contribute to the substrate site. Catalysis depends on His-177, which acts as the Proton acceptor.

It belongs to the LDH/MDH superfamily. MDH type 3 family.

It carries out the reaction (S)-malate + NAD(+) = oxaloacetate + NADH + H(+). Functionally, catalyzes the reversible oxidation of malate to oxaloacetate. This Thermosulfidibacter takaii (strain DSM 17441 / JCM 13301 / NBRC 103674 / ABI70S6) protein is Malate dehydrogenase.